We begin with the raw amino-acid sequence, 211 residues long: Pyridoxine/pyridoxamine 5'-phosphate oxidase (211 aa).

Substrate is bound by residues 7–10 (RRDY) and K65. Residues 60–65 (RIVLLK), 75–76 (YT), R81, K82, and Q104 contribute to the FMN site. Substrate-binding residues include Y122, R126, and S130. Residues 139-140 (QS) and W184 contribute to the FMN site. A substrate-binding site is contributed by 190–192 (RLH). R194 lines the FMN pocket.

It belongs to the pyridoxamine 5'-phosphate oxidase family. As to quaternary structure, homodimer. FMN is required as a cofactor.

It carries out the reaction pyridoxamine 5'-phosphate + O2 + H2O = pyridoxal 5'-phosphate + H2O2 + NH4(+). It catalyses the reaction pyridoxine 5'-phosphate + O2 = pyridoxal 5'-phosphate + H2O2. The protein operates within cofactor metabolism; pyridoxal 5'-phosphate salvage; pyridoxal 5'-phosphate from pyridoxamine 5'-phosphate: step 1/1. It functions in the pathway cofactor metabolism; pyridoxal 5'-phosphate salvage; pyridoxal 5'-phosphate from pyridoxine 5'-phosphate: step 1/1. Catalyzes the oxidation of either pyridoxine 5'-phosphate (PNP) or pyridoxamine 5'-phosphate (PMP) into pyridoxal 5'-phosphate (PLP). The sequence is that of Pyridoxine/pyridoxamine 5'-phosphate oxidase from Aliivibrio salmonicida (strain LFI1238) (Vibrio salmonicida (strain LFI1238)).